The chain runs to 858 residues: Envelope glycoprotein gp160 (858 aa).

Positions 1–19 (MMNQLLIAILLASACLVYC) are cleaved as a signal peptide. Topologically, residues 20–679 (TQYVTVFYGV…LTSWVKYIQY (660 aa)) are extracellular. Residue N34 is glycosylated (N-linked (GlcNAc...) asparagine; by host). C41 and C54 are joined by a disulfide. N-linked (GlcNAc...) asparagine; by host glycosylation is found at N67, N76, N119, N120, N151, N166, N179, N192, N193, N196, N206, N238, N241, N248, N272, N278, N289, N300, N310, N367, N371, N400, N410, N447, N463, and N466. 5 disulfides stabilise this stretch: C98/C214, C105/C205, C110/C163, C227/C257, and C237/C249. The V1 stretch occupies residues 110–162 (CSSTESSTGNNTTSKSTSTTTTTPTDQEQEISEDTPCARADNCSGLGEEETIN). Positions 111 to 134 (SSTESSTGNNTTSKSTSTTTTTPT) are enriched in low complexity. Residues 111–142 (SSTESSTGNNTTSKSTSTTTTTPTDQEQEISE) form a disordered region. Residues 163–205 (CQFNMTGLERDKKKQYNETWYSKDVVCETNNSTNQTQCYMNHC) are V2. A V3 region spans residues 305 to 339 (CKRPGNKTVKQIMLMSGHVFHSHYQPINKRPRQAW). An intrachain disulfide couples C305 to C340. Disulfide bonds link C392-C446 and C399-C419. Residues 399-419 (CNMTWFLNWIENKTHRNYAPC) are V4. The interval 462 to 469 (NNQTNITF) is V5. Residues 512–532 (GVFVLGFLGFLATAGSAMGAA) form a fusion peptide region. The segment at 575–591 (LQARVTAIEKYLQDQAR) is immunosuppression. 3 N-linked (GlcNAc...) asparagine; by host glycosylation sites follow: N611, N620, and N636. Residues 624–645 (QEWEKQVRYLEANISKSLEQAQ) adopt a coiled-coil conformation. An MPER; binding to GalCer region spans residues 657 to 678 (KLNSWDIFGNWFDLTSWVKYIQ). Residues 680–700 (GVLIIVAVIALRIVIYVVQML) traverse the membrane as a helical segment. Over 701-858 (SRLRKGYRPV…IRQGAEIALL (158 aa)) the chain is Cytoplasmic. The YXXV motif; contains endocytosis signal signature appears at 707 to 710 (YRPV). C773 is lipidated: S-palmitoyl cysteine; by host. The Di-leucine internalization motif signature appears at 857 to 858 (LL).

In terms of assembly, the mature envelope protein (Env) consists of a homotrimer of non-covalently associated gp120-gp41 heterodimers. The resulting complex protrudes from the virus surface as a spike. There seems to be as few as 10 spikes on the average virion. Interacts with human CD4, CCR5 and CXCR4, to form a P4HB/PDI-CD4-CXCR4-gp120 complex. Gp120 also interacts with the C-type lectins CD209/DC-SIGN and CLEC4M/DC-SIGNR (collectively referred to as DC-SIGN(R)). Gp120 and gp41 interact with GalCer. As to quaternary structure, the mature envelope protein (Env) consists of a homotrimer of non-covalently associated gp120-gp41 heterodimers. The resulting complex protrudes from the virus surface as a spike. There seems to be as few as 10 spikes on the average virion. In terms of processing, specific enzymatic cleavages in vivo yield mature proteins. Envelope glycoproteins are synthesized as an inactive precursor that is heavily N-glycosylated and processed likely by host cell furin in the Golgi to yield the mature SU and TM proteins. The cleavage site between SU and TM requires the minimal sequence [KR]-X-[KR]-R. Post-translationally, palmitoylation of the transmembrane protein and of Env polyprotein (prior to its proteolytic cleavage) is essential for their association with host cell membrane lipid rafts. Palmitoylation is therefore required for envelope trafficking to classical lipid rafts, but not for viral replication.

The protein resides in the virion membrane. It localises to the host cell membrane. Its subcellular location is the host endosome membrane. In terms of biological role, the surface protein gp120 (SU) attaches the virus to the host lymphoid cell by binding to the primary receptor CD4. This interaction induces a structural rearrangement creating a high affinity binding site for a chemokine coreceptor like CXCR4 and/or CCR5. This peculiar 2 stage receptor-interaction strategy allows gp120 to maintain the highly conserved coreceptor-binding site in a cryptic conformation, protected from neutralizing antibodies. Since CD4 also displays a binding site for the disulfide-isomerase P4HB/PDI, a P4HB/PDI-CD4-CXCR4-gp120 complex may form. In that complex, P4HB/PDI could reach and reduce gp120 disulfide bonds, causing major conformational changes in gp120. TXN, another PDI family member could also be involved in disulfide rearrangements in Env during fusion. These changes are transmitted to the transmembrane protein gp41 and are thought to activate its fusogenic potential by unmasking its fusion peptide. Functionally, the surface protein gp120 is a ligand for CD209/DC-SIGN and CLEC4M/DC-SIGNR, which are respectively found on dendritic cells (DCs), and on endothelial cells of liver sinusoids and lymph node sinuses. These interactions allow capture of viral particles at mucosal surfaces by these cells and subsequent transmission to permissive cells. DCs are professional antigen presenting cells, critical for host immunity by inducing specific immune responses against a broad variety of pathogens. They act as sentinels in various tissues where they take up antigen, process it, and present it to T-cells following migration to lymphoid organs. HIV subverts the migration properties of dendritic cells to gain access to CD4+ T-cells in lymph nodes. Virus transmission to permissive T-cells occurs either in trans (without DCs infection, through viral capture and transmission), or in cis (following DCs productive infection, through the usual CD4-gp120 interaction), thereby inducing a robust infection. In trans infection, bound virions remain infectious over days and it is proposed that they are not degraded, but protected in non-lysosomal acidic organelles within the DCs close to the cell membrane thus contributing to the viral infectious potential during DCs' migration from the periphery to the lymphoid tissues. On arrival at lymphoid tissues, intact virions recycle back to DCs' cell surface allowing virus transmission to CD4+ T-cells. Virion capture also seems to lead to MHC-II-restricted viral antigen presentation, and probably to the activation of HIV-specific CD4+ cells. Its function is as follows. The transmembrane protein gp41 (TM) acts as a class I viral fusion protein. Under the current model, the protein has at least 3 conformational states: pre-fusion native state, pre-hairpin intermediate state, and post-fusion hairpin state. During fusion of viral and target intracellular membranes, the coiled coil regions (heptad repeats) assume a trimer-of-hairpins structure, positioning the fusion peptide in close proximity to the C-terminal region of the ectodomain. The formation of this structure appears to drive apposition and subsequent fusion of viral and target cell membranes. Complete fusion occurs in host cell endosomes and is dynamin-dependent, however some lipid transfer might occur at the plasma membrane. The virus undergoes clathrin-dependent internalization long before endosomal fusion, thus minimizing the surface exposure of conserved viral epitopes during fusion and reducing the efficacy of inhibitors targeting these epitopes. Membranes fusion leads to delivery of the nucleocapsid into the cytoplasm. The envelope glycoprotein gp160 precursor down-modulates cell surface CD4 antigen by interacting with it in the endoplasmic reticulum and blocking its transport to the cell surface. In terms of biological role, the gp120-gp41 heterodimer seems to contribute to T-cell depletion during HIV-1 infection. The envelope glycoproteins expressed on the surface of infected cells induce apoptosis through an interaction with uninfected cells expressing the receptor (CD4) and the coreceptors CXCR4 or CCR5. This type of bystander killing may be obtained by at least three distinct mechanisms. First, the interaction between the 2 cells can induce cellular fusion followed by nuclear fusion within the syncytium. Syncytia are condemned to die from apoptosis. Second, the 2 interacting cells may not fuse entirely and simply exchange plasma membrane lipids, after a sort of hemifusion process, followed by rapid death. Third, it is possible that virus-infected cells, on the point of undergoing apoptosis, fuse with CD4-expressing cells, in which case apoptosis is rapidly transmitted from one cell to the other and thus occurs in a sort of contagious fashion. Functionally, the gp120-gp41 heterodimer allows rapid transcytosis of the virus through CD4 negative cells such as simple epithelial monolayers of the intestinal, rectal and endocervical epithelial barriers. Both gp120 and gp41 specifically recognize glycosphingolipids galactosyl-ceramide (GalCer) or 3' sulfo-galactosyl-ceramide (GalS) present in the lipid rafts structures of epithelial cells. Binding to these alternative receptors allows the rapid transcytosis of the virus through the epithelial cells. This transcytotic vesicle-mediated transport of virions from the apical side to the basolateral side of the epithelial cells does not involve infection of the cells themselves. This chain is Envelope glycoprotein gp160 (env), found in Homo sapiens (Human).